The following is a 334-amino-acid chain: Uracil-DNA glycosylase (334 aa).

A compositionally biased stretch (basic residues) spans 1–17; the sequence is MKRACSRSPSPRRRPSS. Disordered stretches follow at residues 1-63 and 79-104; these read MKRA…CRSS and VTFSSSAPPDPPMDLTNGGVSPAATS. Residues 40 to 50 are compositionally biased toward polar residues; sequence GASNDASTETR. Asp-178 acts as the Proton acceptor in catalysis.

This sequence belongs to the uracil-DNA glycosylase (UDG) superfamily. UNG family.

It is found in the host nucleus. The catalysed reaction is Hydrolyzes single-stranded DNA or mismatched double-stranded DNA and polynucleotides, releasing free uracil.. Excises uracil residues from the DNA which can arise as a result of misincorporation of dUMP residues by DNA polymerase or deamination of cytosines. Therefore may reduce deleterious uracil incorporation into the viral genome, particularly in terminally differentiated cells which lack DNA repair enzymes. In Human herpesvirus 1 (strain 17) (HHV-1), this protein is Uracil-DNA glycosylase.